The following is a 319-amino-acid chain: L-lactate dehydrogenase (319 aa).

NAD(+) contacts are provided by residues Val17, Asp38, Lys43, Tyr69, and 83-84 (GA). Residues Gln86, Arg92, and 124 to 127 (NPVD) contribute to the substrate site. Residues 122-124 (ATN) and Ser147 each bind NAD(+). 152–155 (DTAR) lines the substrate pocket. Arg157 and His172 together coordinate beta-D-fructose 1,6-bisphosphate. His179 serves as the catalytic Proton acceptor. Tyr224 is subject to Phosphotyrosine. Thr233 is a binding site for substrate.

Belongs to the LDH/MDH superfamily. LDH family. In terms of assembly, homotetramer.

The protein resides in the cytoplasm. It carries out the reaction (S)-lactate + NAD(+) = pyruvate + NADH + H(+). It functions in the pathway fermentation; pyruvate fermentation to lactate; (S)-lactate from pyruvate: step 1/1. Allosterically activated by fructose 1,6-bisphosphate (FBP). In terms of biological role, catalyzes the conversion of lactate to pyruvate. The protein is L-lactate dehydrogenase of Bacillus licheniformis (strain ATCC 14580 / DSM 13 / JCM 2505 / CCUG 7422 / NBRC 12200 / NCIMB 9375 / NCTC 10341 / NRRL NRS-1264 / Gibson 46).